A 123-amino-acid polypeptide reads, in one-letter code: RxLR effector protein Avh262 (123 aa).

Residues 1-18 form the signal peptide; it reads MLPVAVVLVVFAVAVTSA. The tract at residues 24 to 46 is disordered; it reads VNPLPRRRRLKGTEEKGHHTNVN. Positions 30–50 match the RxLR-dEER motif; sequence RRRLKGTEEKGHHTNVNDEER. Over residues 34–46 the composition is skewed to basic and acidic residues; the sequence is KGTEEKGHHTNVN. The interval 60–82 is biP-binding; that stretch reads LISKLKVKINAKLLAGDSAKPAT.

It belongs to the RxLR effector family. As to quaternary structure, interacts with host plant ER-luminal binding immunoglobulin proteins (BiPs) such as soybean BiP1, BiP2, BiP3 and BiP4.

Its subcellular location is the secreted. The protein localises to the host endoplasmic reticulum. In terms of biological role, effector that suppresses plant defense responses during the early stages of pathogen infection. Suppresses cell death induced by effectors and PAMPs in plant hosts. Avh262 stabilizes endoplasmic reticulum (ER)-luminal binding immunoglobulin proteins (BiPs), which act as negative regulators of plant resistance to Phytophthora. By stabilizing BiPs, Avh262 suppresses ER stress-triggered cell death and facilitates Phytophthora infection. This is RxLR effector protein Avh262 from Phytophthora sojae (Soybean stem and root rot agent).